A 146-amino-acid chain; its full sequence is Hemoglobin subunit beta (146 aa).

The Globin domain occupies 2–146 (HWTAEEKQLI…VAHALARKYH (145 aa)). Positions 63 and 92 each coordinate heme b.

This sequence belongs to the globin family. As to quaternary structure, heterotetramer of two alpha chains and two beta chains. In terms of tissue distribution, red blood cells.

Involved in oxygen transport from the lung to the various peripheral tissues. The chain is Hemoglobin subunit beta (HBB) from Aegypius monachus (Cinereous vulture).